An 814-amino-acid chain; its full sequence is Origin of replication complex subunit 1 (814 aa).

The segment covering 1–15 has biased composition (polar residues); the sequence is MDLSATPSRSKSGLR. Residues 1-127 are disordered; the sequence is MDLSATPSRS…PKKPKKRAYY (127 aa). Low complexity-rich tracts occupy residues 51 to 62 and 69 to 80; these read APMSPVTPSSVR and ETPTKVTSETPV. The Nuclear localization signal motif lies at 105-112; the sequence is PKRQRQRQ. Basic residues predominate over residues 108–127; sequence QRQRQRQRQQPKKPKKRAYY. The tract at residues 157-181 is histone H3 binding; that stretch reads DPEAEECRVCFRAGAAVMVECDVCL. The PHD-type zinc finger occupies 160 to 209; it reads AEECRVCFRAGAAVMVECDVCLGGFHLRCVRPPLRRVPEGDWACPYCEAE. Zn(2+) is bound by residues C163, C166, C177, C180, H185, and C188. The tract at residues 197–201 is histone H3 binding; the sequence is PEGDW. Zn(2+) contacts are provided by C203 and C206. In terms of domain architecture, BAH spans 218–335; that stretch reads PKPPEGKRIV…IHWHNFKRLA (118 aa). Positions 310-315 are histone H3 binding; the sequence is ASDQGD. Acidic residues-rich tracts occupy residues 339–349 and 360–373; these read DEPETKEDPGD and SDSD…EEEE. Residues 339-384 form a disordered region; sequence DEPETKEDPGDEPYNAGNDYVSDSDEDSEYDEEEEPTKCSSARTHQ. The necessary and sufficient for ORC complex assembly stretch occupies residues 433–804; sequence PKSLPCRDKE…DDVTFALKES (372 aa). Residues 468-475 and 468-476 each bind ATP; these read GVPGTGKT and GVPGTGKTM. Mg(2+) is bound by residues D558 and E559. The ATP site is built by E559, N592, and R657.

This sequence belongs to the ORC1 family. In terms of assembly, component of the origin recognition complex (ORC) composed of at least ORC1, ORC2, ORC3, ORC4, ORC5 and ORC6. ORC is regulated in a cell-cycle and development dependent manner. It is sequentially assembled at the exit from anaphase of mitosis and disassembled as cells enter S phase. Binds unmodified and methylated histone H3. Expressed strongly in root tips and shoot apical meristem (SAM), and weakly in young leaves. Not detected in mature leaves.

The protein resides in the nucleus. Functionally, essential protein. Component of the origin recognition complex (ORC) that binds origins of replication. It has a role in both chromosomal replication and mating type transcriptional silencing. Binds to the ARS consensus sequence (ACS) of origins of replication. H3K4me3 effector that positively regulates the transcription of a subset of genes. Required for cell proliferation. This chain is Origin of replication complex subunit 1, found in Oryza sativa subsp. japonica (Rice).